Consider the following 221-residue polypeptide: Protein-disulfide oxidoreductase DsbI (221 aa).

A helical membrane pass occupies residues 27–47 (FLWLLMAVAMGGLIILAHSFF). An intrachain disulfide couples Cys56 to Cys59. 2 helical membrane-spanning segments follow: residues 64–84 (FAMF…KNII) and 85–105 (LKLI…KFSV). A disulfide bridge connects residues Cys128 and Cys154. A helical transmembrane segment spans residues 189 to 209 (LAFYEYGAGVPAGVWAMFCTV).

This sequence belongs to the DsbB family. DsbI subfamily. As to quaternary structure, interacts with DsbL.

The protein localises to the cell inner membrane. Its function is as follows. Required for disulfide bond formation in some proteins. Part of a redox system composed of DsbI and DsbL that mediates formation of an essential disulfide bond in AssT. In Lelliottia amnigena (Enterobacter amnigenus), this protein is Protein-disulfide oxidoreductase DsbI.